The following is a 388-amino-acid chain: MNFKLFGSALILSGTALGAGMLAIPMVLAQFGLFYSTLLMLIICAGTTYAALLLTEACSKTELAFGINTVANKTIGKGGQLVTNALFYLLLFCMLIAYILGAADLIKRIFSMMNVEMSIEFAQVAFTLFASAFVVCGTQIIDKLNRLLFFFMISMLVLTLIILIPGMTVENLSQVTNHDKGMLFDTSTILFTSFASMPVIPSLVAYNKEATKQQLRNMVILGSIIPLICYLVWLYAVVGNLTANEITHFSNISDLIQTFSAKNEYIEIILSIFTSLALLTSFLGVAMALYNQNKDMISHNKIVTYVCTFILPLLGAGLAADQFLSVLGYAGVILVFLAIFIPLAMVVTLRKKETEEVHQNLHIYTAEGGKLALGLTLLFGLLLLISQI.

The next 11 membrane-spanning stretches (helical) occupy residues 5–27 (LFGS…IPMV), 31–53 (FGLF…AALL), 86–106 (LFYL…ADLI), 121–141 (FAQV…TQII), 147–167 (LLFF…IPGM), 186–206 (TSTI…LVAY), 218–238 (MVIL…YAVV), 268–288 (IILS…VAMA), 302–322 (IVTY…AADQ), 326–346 (VLGY…LAMV), and 368–388 (GGKL…ISQI).

It belongs to the amino acid/polyamine transporter 2 family.

The protein resides in the cell inner membrane. In terms of biological role, seems to be involved in glutamine transport. Complements an E.coli glnP deletion mutant. This Aliivibrio fischeri (strain ATCC 700601 / ES114) (Vibrio fischeri) protein is Glutamine transporter 2.